The following is a 690-amino-acid chain: Glycine--tRNA ligase beta subunit (690 aa).

This sequence belongs to the class-II aminoacyl-tRNA synthetase family. In terms of assembly, tetramer of two alpha and two beta subunits.

It localises to the cytoplasm. It catalyses the reaction tRNA(Gly) + glycine + ATP = glycyl-tRNA(Gly) + AMP + diphosphate. This is Glycine--tRNA ligase beta subunit from Buchnera aphidicola subsp. Acyrthosiphon pisum (strain Tuc7).